Reading from the N-terminus, the 424-residue chain is Imidazolonepropionase (424 aa).

Residues His-84 and His-86 each coordinate Fe(3+). Positions 84 and 86 each coordinate Zn(2+). 4-imidazolone-5-propanoate is bound by residues Arg-93, Tyr-156, and His-189. Residue Tyr-156 coordinates N-formimidoyl-L-glutamate. Residue His-254 coordinates Fe(3+). Residue His-254 coordinates Zn(2+). Glu-257 is a binding site for 4-imidazolone-5-propanoate. Fe(3+) is bound at residue Asp-328. Asp-328 contacts Zn(2+). Asn-330 and Gly-332 together coordinate N-formimidoyl-L-glutamate. Residue Ser-333 coordinates 4-imidazolone-5-propanoate.

The protein belongs to the metallo-dependent hydrolases superfamily. HutI family. It depends on Zn(2+) as a cofactor. Requires Fe(3+) as cofactor.

The protein localises to the cytoplasm. It carries out the reaction 4-imidazolone-5-propanoate + H2O = N-formimidoyl-L-glutamate. The protein operates within amino-acid degradation; L-histidine degradation into L-glutamate; N-formimidoyl-L-glutamate from L-histidine: step 3/3. Its function is as follows. Catalyzes the hydrolytic cleavage of the carbon-nitrogen bond in imidazolone-5-propanoate to yield N-formimidoyl-L-glutamate. It is the third step in the universal histidine degradation pathway. The protein is Imidazolonepropionase of Geobacillus sp. (strain WCH70).